A 252-amino-acid polypeptide reads, in one-letter code: Insulin-induced gene 1 protein (252 aa).

At 1–59 the chain is on the cytoplasmic side; sequence MPRLESGAWSCSCAARARHAARPGEAAPKADAMQSPSPSAGRAEREASGGSATTWRQHL. The interval 22–48 is disordered; that stretch reads RPGEAAPKADAMQSPSPSAGRAEREAS. The helical transmembrane segment at 60–82 threads the bilayer; the sequence is VQRSVVLFVVGAFMALVLNLLQI. Over 83–101 the chain is Extracellular; that stretch reads QRNVTLFPDEVIATLFSSA. Residues 102–119 traverse the membrane as a helical segment; sequence WWVPPCCGTAAAVVGLLY. The Cytoplasmic portion of the chain corresponds to 120-134; that stretch reads PCIDSHLGEPHKFKR. The helical transmembrane segment at 135–157 threads the bilayer; the sequence is EWASVMRCIAVFVGINHASAKLD. At 158–160 the chain is on the extracellular side; that stretch reads FAN. Residues 161–179 form a helical membrane-spanning segment; that stretch reads NVQLSLTLAALSLGLWWTF. The Cytoplasmic portion of the chain corresponds to 180 to 184; it reads DRSRS. A helical transmembrane segment spans residues 185-206; that stretch reads GLGLGITIAFVATLITQFLVYN. The Extracellular portion of the chain corresponds to 207 to 220; the sequence is GVYQYTSPDFLYIR. A helical membrane pass occupies residues 221 to 238; it reads SWLPCIFFSGGVTVGNIG. Residues 239-252 lie on the Cytoplasmic side of the membrane; it reads RQLAMGIPEKPHND. Positions 246-252 match the KxHxx motif; it reads PEKPHND.

The protein belongs to the INSIG family. As to quaternary structure, interacts with SCAP; interaction is direct and only takes place in the presence of sterols; it prevents interaction between SCAP and the coat protein complex II (COPII). Associates with the SCAP-SREBP complex; association is mediated via its interaction with SCAP and only takes place in the presence of sterols.

The protein resides in the endoplasmic reticulum membrane. Its function is as follows. Oxysterol-binding protein that mediates feedback control of cholesterol synthesis by controlling both endoplasmic reticulum to Golgi transport of SCAP and degradation of HMGCR. Acts as a negative regulator of cholesterol biosynthesis by mediating the retention of the SCAP-SREBP complex in the endoplasmic reticulum, thereby blocking the processing of sterol regulatory element-binding proteins (SREBPs). Binds oxysterol, including 25-hydroxycholesterol, regulating interaction with SCAP and retention of the SCAP-SREBP complex in the endoplasmic reticulum. In presence of oxysterol, interacts with SCAP, retaining the SCAP-SREBP complex in the endoplasmic reticulum, thereby preventing SCAP from escorting SREBPs to the Golgi. Sterol deprivation reduces oxysterol-binding, disrupting the interaction between INSIG1 and SCAP, thereby promoting Golgi transport of the SCAP-SREBP complex, followed by processing and nuclear translocation of SREBPs. Also regulates cholesterol synthesis by regulating degradation of HMGCR. In Gallus gallus (Chicken), this protein is Insulin-induced gene 1 protein.